The chain runs to 139 residues: NAD(P) transhydrogenase subunit alpha part 2 (139 aa).

3 helical membrane passes run 49 to 69 (FWWL…VVWS), 78 to 98 (LMGV…IATG), and 107 to 127 (VLGF…FIVT).

As to quaternary structure, complex of an alpha and a beta chain; in Rhodospirillum, the alpha chain seems to be made of two subunits.

The protein localises to the cell inner membrane. It carries out the reaction NAD(+) + NADPH + H(+)(in) = NADH + NADP(+) + H(+)(out). The transhydrogenation between NADH and NADP is coupled to respiration and ATP hydrolysis and functions as a proton pump across the membrane. The protein is NAD(P) transhydrogenase subunit alpha part 2 (pntAB) of Rhodospirillum rubrum (strain ATCC 11170 / ATH 1.1.1 / DSM 467 / LMG 4362 / NCIMB 8255 / S1).